Here is a 348-residue protein sequence, read N- to C-terminus: MDNFFMTWLLPLFIVVGKTLLLLTVLLVLIAYLLYADRKIWAAVQLRRGPNVVGPWGLLQSFADLIKFVVKEPIIPSGANKGVFLLAPFVSATLALSAWAVVPVNEGWEIASINVGLLYILAISSLEVYGVIMGGWASNSKYPFLGALRSAAQMVSYEVSIGFVLVTVILVSGSLDLTTIVQEQNKGLGTYLGLPFSSLLDWNWLILFPMFIIFFISALAETNRPPFDLVEAESELVAGHMVEYSSTPYMLFFLGEYVAIVLMCALTTILFLGGWLPPLDVWWLNWVPGVIWFVLKVCFVFFWFAMVKAFVPRYRYDQLMRLGWKVFLPISLAMVVITAAILKYTSFA.

Transmembrane regions (helical) follow at residues 10 to 30 (LPLF…LVLI), 82 to 102 (GVFL…WAVV), 115 to 135 (VGLL…IMGG), 161 to 181 (IGFV…TTIV), 199 to 219 (LLDW…ISAL), 251 to 271 (LFFL…TILF), 287 to 307 (VPGV…FAMV), and 322 to 342 (LGWK…AAIL).

It belongs to the complex I subunit 1 family. In terms of assembly, NDH-1 is composed of 14 different subunits. Subunits NuoA, H, J, K, L, M, N constitute the membrane sector of the complex.

Its subcellular location is the cell inner membrane. The catalysed reaction is a quinone + NADH + 5 H(+)(in) = a quinol + NAD(+) + 4 H(+)(out). NDH-1 shuttles electrons from NADH, via FMN and iron-sulfur (Fe-S) centers, to quinones in the respiratory chain. The immediate electron acceptor for the enzyme in this species is believed to be ubiquinone. Couples the redox reaction to proton translocation (for every two electrons transferred, four hydrogen ions are translocated across the cytoplasmic membrane), and thus conserves the redox energy in a proton gradient. This subunit may bind ubiquinone. This chain is NADH-quinone oxidoreductase subunit H, found in Bartonella bacilliformis (strain ATCC 35685 / KC583 / Herrer 020/F12,63).